The sequence spans 179 residues: Insulin-like growth factor 2 (179 aa).

Residues 1–24 (MGITAGKSVLVLLAFLAFASCCYA) form the signal peptide. Residues 25-52 (AYRPSETLCGGELVDTLQFVCGDRGFYF) form a b region. 3 cysteine pairs are disulfide-bonded: C33-C71, C45-C84, and C70-C75. The c stretch occupies residues 53–64 (SRPSSRINRRSR). The interval 65–85 (GIVEECCFRSCDLALLETYCA) is a. The interval 86–91 (TPAKSE) is d. Positions 92-179 (RDVSASTTVL…GGASSKASSD (88 aa)) are cleaved as a propeptide — e peptide. T106 carries O-linked (GalNAc...) threonine glycosylation. O-linked (GalNAc...) serine glycosylation is present at S154. Residues 160–179 (ALPTQDPATHGGASSKASSD) form a disordered region. O-linked (GalNAc...) threonine glycosylation is present at T163.

The protein belongs to the insulin family. As to quaternary structure, interacts with MYORG; this interaction is required for IGF2 secretion. Interacts with integrins ITGAV:ITGB3 and ITGA6:ITGB4; integrin-binding is required for IGF2 signaling. Interacts with IGFBP2. Post-translationally, proteolytically processed by PCSK4, proIGF2 is cleaved at Arg-128 and Arg-92 to generate big-IGF2 and mature IGF2.

It is found in the secreted. Functionally, the insulin-like growth factors possess growth-promoting activity. Major fetal growth hormone in mammals. Plays a key role in regulating fetoplacental development. IGF2 is influenced by placental lactogen. Also involved in tissue differentiation. In adults, involved in glucose metabolism in adipose tissue, skeletal muscle and liver. Acts as a ligand for integrin which is required for IGF2 signaling. Positively regulates myogenic transcription factor MYOD1 function by facilitating the recruitment of transcriptional coactivators, thereby controlling muscle terminal differentiation. Inhibits myoblast differentiation and modulates metabolism via increasing the mitochondrial respiration rate. Preptin undergoes glucose-mediated co-secretion with insulin, and acts as a physiological amplifier of glucose-mediated insulin secretion. Exhibits osteogenic properties by increasing osteoblast mitogenic activity through phosphoactivation of MAPK1 and MAPK3. The sequence is that of Insulin-like growth factor 2 from Bos taurus (Bovine).